Reading from the N-terminus, the 506-residue chain is Histidine ammonia-lyase (506 aa).

Residues 144-146 (ASG) constitute a cross-link (5-imidazolinone (Ala-Gly)). Ser-145 is subject to 2,3-didehydroalanine (Ser).

This sequence belongs to the PAL/histidase family. In terms of processing, contains an active site 4-methylidene-imidazol-5-one (MIO), which is formed autocatalytically by cyclization and dehydration of residues Ala-Ser-Gly.

It localises to the cytoplasm. The enzyme catalyses L-histidine = trans-urocanate + NH4(+). It functions in the pathway amino-acid degradation; L-histidine degradation into L-glutamate; N-formimidoyl-L-glutamate from L-histidine: step 1/3. This Legionella pneumophila subsp. pneumophila (strain Philadelphia 1 / ATCC 33152 / DSM 7513) protein is Histidine ammonia-lyase.